The primary structure comprises 312 residues: Ribosomal RNA small subunit methyltransferase H (312 aa).

S-adenosyl-L-methionine is bound by residues 33-35, aspartate 53, phenylalanine 80, aspartate 101, and glutamine 108; that span reads SGH.

Belongs to the methyltransferase superfamily. RsmH family.

It localises to the cytoplasm. It catalyses the reaction cytidine(1402) in 16S rRNA + S-adenosyl-L-methionine = N(4)-methylcytidine(1402) in 16S rRNA + S-adenosyl-L-homocysteine + H(+). Functionally, specifically methylates the N4 position of cytidine in position 1402 (C1402) of 16S rRNA. The sequence is that of Ribosomal RNA small subunit methyltransferase H from Desulforapulum autotrophicum (strain ATCC 43914 / DSM 3382 / VKM B-1955 / HRM2) (Desulfobacterium autotrophicum).